We begin with the raw amino-acid sequence, 277 residues long: Digeranylgeranylglyceryl phosphate synthase (277 aa).

7 helical membrane passes run 16-36 (ILAGVVGILGSLVAYEGIPSI), 40-60 (GLVFLVVYLGCSAGNTINDYF), 101-121 (FLGVEALLFALGAYALTFIYA), 129-149 (FIGNVAVALLTAATPIYGALG), 153-173 (VGLAGYLAICAFLVNVSREIM), 205-225 (IFGVLTVITSFLPVKVGIGLG), and 257-277 (LKIATFIAVISFLLGALTKGV).

Belongs to the UbiA prenyltransferase family. DGGGP synthase subfamily. Mg(2+) is required as a cofactor.

It localises to the cell membrane. It carries out the reaction sn-3-O-(geranylgeranyl)glycerol 1-phosphate + (2E,6E,10E)-geranylgeranyl diphosphate = 2,3-bis-O-(geranylgeranyl)-sn-glycerol 1-phosphate + diphosphate. The protein operates within membrane lipid metabolism; glycerophospholipid metabolism. In terms of biological role, prenyltransferase that catalyzes the transfer of the geranylgeranyl moiety of geranylgeranyl diphosphate (GGPP) to the C2 hydroxyl of (S)-3-O-geranylgeranylglyceryl phosphate (GGGP). This reaction is the second ether-bond-formation step in the biosynthesis of archaeal membrane lipids. This chain is Digeranylgeranylglyceryl phosphate synthase, found in Pyrococcus abyssi (strain GE5 / Orsay).